We begin with the raw amino-acid sequence, 184 residues long: Photosystem I assembly protein Ycf4 (184 aa).

The next 2 membrane-spanning stretches (helical) occupy residues 19-39 (ISNL…FLVG) and 57-77 (IIFF…LFIS).

The protein belongs to the Ycf4 family.

The protein resides in the plastid thylakoid membrane. In terms of biological role, seems to be required for the assembly of the photosystem I complex. In Cuscuta exaltata (Tall dodder), this protein is Photosystem I assembly protein Ycf4.